A 3075-amino-acid chain; its full sequence is Laminin subunit alpha-1 (3075 aa).

Residues 1–17 (MRGGVLLVLLLCVAAQC) form the signal peptide. Residues 18-269 (RQRGLFPAIL…SIKDISVGGM (252 aa)) form the Laminin N-terminal domain. Cystine bridges form between cysteine 270–cysteine 279, cysteine 272–cysteine 290, cysteine 292–cysteine 301, cysteine 304–cysteine 324, cysteine 327–cysteine 336, cysteine 329–cysteine 361, cysteine 364–cysteine 373, cysteine 376–cysteine 394, cysteine 397–cysteine 409, cysteine 399–cysteine 427, cysteine 429–cysteine 438, cysteine 441–cysteine 451, cysteine 454–cysteine 467, cysteine 456–cysteine 471, cysteine 473–cysteine 482, and cysteine 485–cysteine 500. Laminin EGF-like domains lie at 270–326 (CICY…TCEA), 327–396 (CNCH…PCRP), 397–453 (CNCD…TCVS), and 454–502 (CGCN…GCSE). The 10-residue stretch at 503 to 512 (CFCFGVSDVC) folds into the Laminin EGF-like 5; first part domain. One can recognise a Laminin IV type A 1 domain in the interval 516–708 (SWPVGQVNSM…DLVVAADVEH (193 aa)). Residue asparagine 665 is glycosylated (N-linked (GlcNAc...) asparagine). Residues 709–741 (CECPQGYTGTSCESCLSGYYRVDGILFGGICQP) form the Laminin EGF-like 5; second part domain. 32 disulfides stabilise this stretch: cysteine 742/cysteine 751, cysteine 744/cysteine 757, cysteine 760/cysteine 769, cysteine 772/cysteine 788, cysteine 791/cysteine 806, cysteine 793/cysteine 816, cysteine 819/cysteine 828, cysteine 831/cysteine 846, cysteine 849/cysteine 863, cysteine 851/cysteine 870, cysteine 873/cysteine 882, cysteine 885/cysteine 899, cysteine 902/cysteine 914, cysteine 904/cysteine 921, cysteine 923/cysteine 932, cysteine 935/cysteine 948, cysteine 951/cysteine 963, cysteine 953/cysteine 969, cysteine 971/cysteine 980, cysteine 983/cysteine 995, cysteine 998/cysteine 1007, cysteine 1000/cysteine 1014, cysteine 1016/cysteine 1025, cysteine 1028/cysteine 1041, cysteine 1044/cysteine 1056, cysteine 1046/cysteine 1063, cysteine 1065/cysteine 1074, cysteine 1077/cysteine 1087, cysteine 1090/cysteine 1102, cysteine 1092/cysteine 1118, cysteine 1120/cysteine 1129, and cysteine 1132/cysteine 1147. Laminin EGF-like domains lie at 742–790 (CECH…DCQP), 791–848 (CACP…SCVP), 849–901 (CDCS…NCRA), 902–950 (CECH…GCRP), 951–997 (CNCS…SCTP), 998–1043 (CDCP…GCQA), 1044–1089 (CNCS…DCVP), and 1090–1149 (CDCD…GCSP). The Laminin EGF-like 14; first part domain maps to 1150-1159 (CFCSGLSHLC). Residues 1170-1361 (VTLGSDQPLL…EEEVASLLEN (192 aa)) form the Laminin IV type A 2 domain. The Laminin EGF-like 14; second part domain maps to 1362–1402 (CVCPPGTVGFSCQDCAPGYHRGKLPAGSDRGPRPLVAPCVP). Disulfide bonds link cysteine 1403-cysteine 1412, cysteine 1405-cysteine 1419, cysteine 1422-cysteine 1431, cysteine 1434-cysteine 1449, cysteine 1452-cysteine 1466, cysteine 1454-cysteine 1476, cysteine 1479-cysteine 1488, cysteine 1491-cysteine 1506, cysteine 1509-cysteine 1521, cysteine 1511-cysteine 1528, cysteine 1530-cysteine 1539, and cysteine 1542-cysteine 1553. 3 consecutive Laminin EGF-like domains span residues 1403-1451 (CSCN…DCAL), 1452-1508 (CACP…SCQK), and 1509-1555 (CDCN…DCVS). The domain II and I stretch occupies residues 1556–2116 (CDDECVGVLL…SQARKQAASI (561 aa)). Residues asparagine 1579, asparagine 1689, asparagine 1717, asparagine 2047, and asparagine 2243 are each glycosylated (N-linked (GlcNAc...) asparagine). Residues 1706–1783 (MQIRDFTQLH…KMQESNHLLL (78 aa)) are a coiled coil. Laminin G-like domains follow at residues 2117-2297 (KVAV…CRGC), 2305-2481 (DPSF…RKGC), 2486-2673 (IRSV…LDTC), 2713-2885 (AHQF…VNRC), and 2890-3070 (QEGT…LHSC). 2 disulfide bridges follow: cysteine 2271–cysteine 2297 and cysteine 2457–cysteine 2481. A Cell attachment site motif is present at residues 2534–2536 (RGD). Disulfide bonds link cysteine 2646–cysteine 2673, cysteine 2860–cysteine 2885, and cysteine 3039–cysteine 3070.

In terms of assembly, laminin is a complex glycoprotein, consisting of three different polypeptide chains (alpha, beta, gamma), which are bound to each other by disulfide bonds into a cross-shaped molecule comprising one long and three short arms with globules at each end. Alpha-1 is a subunit of laminin-1 (laminin-111 or EHS laminin) and laminin-3 (laminin-121 or S-laminin). Post-translationally, tyrosine phosphorylated by PKDCC/VLK.

The protein localises to the secreted. Its subcellular location is the extracellular space. The protein resides in the extracellular matrix. It localises to the basement membrane. Its function is as follows. Binding to cells via a high affinity receptor, laminin is thought to mediate the attachment, migration and organization of cells into tissues during embryonic development by interacting with other extracellular matrix components. This Homo sapiens (Human) protein is Laminin subunit alpha-1 (LAMA1).